A 243-amino-acid chain; its full sequence is Zwei Ig domain protein zig-6 (243 aa).

Positions 1 to 20 (MTKLCLLLLPLVFLVSYSFA) are cleaved as a signal peptide. 2 Ig-like C2-type domains span residues 30-118 (PNAN…MDVI) and 133-212 (GQVL…KTVT). A disulfide bridge connects residues Cys-47 and Cys-102. 2 N-linked (GlcNAc...) asparagine glycosylation sites follow: Asn-91 and Asn-142. The cysteines at positions 145 and 196 are disulfide-linked.

Expressed in head and tail body wall muscles.

The protein resides in the secreted. Probably not involved in maintaining the position of ASI and ASH head neuron cell bodies and ventral nerve cord axons of PVQ, PVP, RMEV, AVK and HSN neurons. The sequence is that of Zwei Ig domain protein zig-6 from Caenorhabditis elegans.